The sequence spans 486 residues: Transcriptional adapter 2-beta (486 aa).

The ZZ-type zinc-finger motif lies at 4–59 (LGKKYCVNCLADVTNLRIRCAECQDIELCPECFSAGAEIGNHRRWHGYQQVDGGRF). Zn(2+)-binding residues include C9, C12, C23, C26, C32, C35, H45, and H49. Residues 65 to 118 (EAEGGWTSREEQSLLDAIEQYGFGNWEDMAAHVGASRTPQEVMDHYVSMYIHGN) enclose the SANT domain. Disordered stretches follow at residues 237-291 (KKDK…EKGQ) and 343-377 (EYEA…TAGL). Composition is skewed to gly residues over residues 247–262 (GTVG…GSGS) and 367–377 (SSGGGGGTAGL).

The protein resides in the nucleus. Functionally, transcriptional coactivator. This is Transcriptional adapter 2-beta (tada2b) from Danio rerio (Zebrafish).